We begin with the raw amino-acid sequence, 374 residues long: Histidine biosynthesis bifunctional protein HisB (374 aa).

Residues 1–183 are histidinol-phosphatase; the sequence is MKKKVLFIDR…RVAEFLFAGE (183 aa). The active-site Nucleophile is Asp-9. Positions 9, 11, and 131 each coordinate Mg(2+). Asp-11 functions as the Proton donor in the catalytic mechanism. The interval 184–374 is imidazoleglycerol-phosphate dehydratase; the sequence is RRAEIRRTTK…FELPSSKGVL (191 aa).

The protein in the N-terminal section; belongs to the histidinol-phosphatase family. This sequence in the C-terminal section; belongs to the imidazoleglycerol-phosphate dehydratase family. Mg(2+) is required as a cofactor.

Its subcellular location is the cytoplasm. The enzyme catalyses D-erythro-1-(imidazol-4-yl)glycerol 3-phosphate = 3-(imidazol-4-yl)-2-oxopropyl phosphate + H2O. It catalyses the reaction L-histidinol phosphate + H2O = L-histidinol + phosphate. It participates in amino-acid biosynthesis; L-histidine biosynthesis; L-histidine from 5-phospho-alpha-D-ribose 1-diphosphate: step 6/9. Its pathway is amino-acid biosynthesis; L-histidine biosynthesis; L-histidine from 5-phospho-alpha-D-ribose 1-diphosphate: step 8/9. In Bacteroides fragilis (strain ATCC 25285 / DSM 2151 / CCUG 4856 / JCM 11019 / LMG 10263 / NCTC 9343 / Onslow / VPI 2553 / EN-2), this protein is Histidine biosynthesis bifunctional protein HisB.